A 591-amino-acid chain; its full sequence is Protein NRT1/ PTR FAMILY 1.1 (591 aa).

11 helical membrane passes run 68 to 88 (TVLF…AFLS), 98 to 118 (IVIA…TAML), 139 to 159 (SSQL…SGGI), 186 to 206 (FFGW…TVIV), 216 to 236 (IGFG…VFAS), 329 to 349 (LKAL…SINV), 374 to 394 (IPAG…VVLY), 418 to 438 (MGLG…VEHY), 460 to 480 (AMWL…TGIG), 496 to 516 (IAAS…SVIL), and 543 to 563 (YYWV…VCSW).

It belongs to the major facilitator superfamily. Proton-dependent oligopeptide transporter (POT/PTR) (TC 2.A.17) family. As to expression, expressed in siliques, shoots and roots. Mainly detected in larger expanded leaves, in the companion cells of major veins.

It is found in the cell membrane. In terms of biological role, low-affinity nitrate transporter involved in xylem-to-phloem transfer for redistributing nitrate into developing leaves. Not involved in dipeptides transport. This is Protein NRT1/ PTR FAMILY 1.1 (NPF1.1) from Arabidopsis thaliana (Mouse-ear cress).